A 493-amino-acid polypeptide reads, in one-letter code: Tripartite motif-containing protein 5 (493 aa).

A2 is modified (N-acetylalanine). The RING-type zinc finger occupies 15 to 59 (CPICLELLTQPLSLDCGHSFCQACLTANHKKSMLDKGESSCPVCR). The residue at position 86 (S86) is a Phosphoserine. A B box-type zinc finger spans residues 90–132 (QKVDHCARHGEKLLLFCQEDGKVICWLCERSQEHRGHHTFLTE). Positions 95, 98, 117, and 123 each coordinate Zn(2+). Residues 131–240 (TEEVAREYQV…LISDLERRLQ (110 aa)) are a coiled coil. The segment at 185–198 (FEQLRDILDWEESN) is required for interaction with GABARAP and for autophagy. In terms of domain architecture, B30.2/SPRY spans 281–493 (LKGMLEVFRE…VPMTLCSPSS (213 aa)).

This sequence belongs to the TRIM/RBCC family. In terms of assembly, can form homodimers and homotrimers. In addition to lower-order dimerization, also exhibits a higher-order multimerization and both low- and high-order multimerizations are essential for its restriction activity. Interacts with BTBD1 and BTBD2. Interacts with PSMC4, PSMC5, PSMD7 and HSPA8/HSC70. Interacts (via B30.2/SPRY domain) with HSPA1A/B. Interacts with PSMC2, MAP3K7/TAK1, TAB2 and TAB3. Interacts with SQSTM1. Interacts with TRIM6 and TRIM34. Interacts with ULK1 (phosphorylated form), GABARAP, GABARAPL1, GABARAPL2, MAP1LC3A, MAP1LC3C and BECN1. Post-translationally, degraded in a proteasome-independent fashion in the absence of viral infection but in a proteasome-dependent fashion following exposure to restriction sensitive virus. Autoubiquitinated in a RING finger- and UBE2D2-dependent manner. Monoubiquitinated by TRIM21. Deubiquitinated by Yersinia YopJ. Ubiquitination may not lead to proteasomal degradation.

It is found in the cytoplasm. The protein resides in the nucleus. The catalysed reaction is S-ubiquitinyl-[E2 ubiquitin-conjugating enzyme]-L-cysteine + [acceptor protein]-L-lysine = [E2 ubiquitin-conjugating enzyme]-L-cysteine + N(6)-ubiquitinyl-[acceptor protein]-L-lysine.. The protein operates within protein modification; protein ubiquitination. Its function is as follows. Capsid-specific restriction factor that prevents infection from non-host-adapted retroviruses. Blocks viral replication early in the life cycle, after viral entry but before reverse transcription. In addition to acting as a capsid-specific restriction factor, also acts as a pattern recognition receptor that activates innate immune signaling in response to the retroviral capsid lattice. Binding to the viral capsid triggers its E3 ubiquitin ligase activity, and in concert with the heterodimeric ubiquitin conjugating enzyme complex UBE2V1-UBE2N (also known as UBC13-UEV1A complex) generates 'Lys-63'-linked polyubiquitin chains, which in turn are catalysts in the autophosphorylation of the MAP3K7/TAK1 complex (includes TAK1, TAB2, and TAB3). Activation of the MAP3K7/TAK1 complex by autophosphorylation results in the induction and expression of NF-kappa-B and MAPK-responsive inflammatory genes, thereby leading to an innate immune response in the infected cell. Plays a role in regulating autophagy through activation of autophagy regulator BECN1 by causing its dissociation from its inhibitors BCL2 and TAB2. The polypeptide is Tripartite motif-containing protein 5 (TRIM5) (Pan paniscus (Pygmy chimpanzee)).